The following is a 149-amino-acid chain: Calmodulin (149 aa).

An N-acetylalanine modification is found at Ala-2. 4 EF-hand domains span residues 8–43 (EQIS…LGQN), 44–79 (PTEA…KMRD), 81–116 (DSEE…LGEK), and 117–149 (LTDN…MLSK). Ca(2+)-binding residues include Asp-21, Asp-23, Asp-25, Thr-27, Glu-32, Asp-57, Asp-59, Asn-61, Thr-63, Glu-68, Asp-94, Asp-96, Asn-98, Tyr-100, Glu-105, Asp-130, Asp-132, Asp-134, Gln-136, and Glu-141.

It belongs to the calmodulin family.

Its function is as follows. Calmodulin mediates the control of a large number of enzymes, ion channels and other proteins by Ca(2+). Among the enzymes to be stimulated by the calmodulin-Ca(2+) complex are a number of protein kinases and phosphatases. This is Calmodulin (CMD1) from Pleurotus ostreatus (Oyster mushroom).